A 200-amino-acid polypeptide reads, in one-letter code: Cysteine dioxygenase type 1 (200 aa).

The Fe cation site is built by histidine 86, histidine 88, and histidine 140. The 3'-(S-cysteinyl)-tyrosine (Cys-Tyr) cross-link spans 93 to 157; the sequence is CFLKMLQGNL…TEPAVSLHLY (65 aa).

The protein belongs to the cysteine dioxygenase family. Monomer. Fe(2+) serves as cofactor. Requires Ni(2+) as cofactor. It depends on Zn(2+) as a cofactor. Post-translationally, the thioether cross-link between Cys-93 and Tyr-157 plays a structural role through stabilizing the Fe(2+) ion, and prevents the production of highly damaging free hydroxyl radicals by holding the oxygen radical via hydroxyl hydrogen. In terms of tissue distribution, highly expressed in liver and placenta. Low expression in heart, brain and pancreas. Also detected in hepatoblastoma Hep-G2 cells.

The enzyme catalyses L-cysteine + O2 = 3-sulfino-L-alanine + H(+). The protein operates within organosulfur biosynthesis; taurine biosynthesis; hypotaurine from L-cysteine: step 1/2. Functionally, catalyzes the oxidation of cysteine to cysteine sulfinic acid with addition of molecular dioxygen. The sequence is that of Cysteine dioxygenase type 1 (CDO1) from Homo sapiens (Human).